The primary structure comprises 152 residues: 3-hydroxyacyl-[acyl-carrier-protein] dehydratase FabZ (152 aa).

His-54 is a catalytic residue.

The protein belongs to the thioester dehydratase family. FabZ subfamily.

It is found in the cytoplasm. The enzyme catalyses a (3R)-hydroxyacyl-[ACP] = a (2E)-enoyl-[ACP] + H2O. Functionally, involved in unsaturated fatty acids biosynthesis. Catalyzes the dehydration of short chain beta-hydroxyacyl-ACPs and long chain saturated and unsaturated beta-hydroxyacyl-ACPs. In Roseobacter denitrificans (strain ATCC 33942 / OCh 114) (Erythrobacter sp. (strain OCh 114)), this protein is 3-hydroxyacyl-[acyl-carrier-protein] dehydratase FabZ.